A 95-amino-acid polypeptide reads, in one-letter code: Integration host factor subunit beta (95 aa).

The protein belongs to the bacterial histone-like protein family. As to quaternary structure, heterodimer of an alpha and a beta chain.

In terms of biological role, this protein is one of the two subunits of integration host factor, a specific DNA-binding protein that functions in genetic recombination as well as in transcriptional and translational control. The sequence is that of Integration host factor subunit beta from Klebsiella pneumoniae (strain 342).